We begin with the raw amino-acid sequence, 448 residues long: Elongation factor 1-alpha (448 aa).

Positions 5-230 (KIHISIVVIG…DQINEPKRPS (226 aa)) constitute a tr-type G domain. The tract at residues 14–21 (GHVDSGKS) is G1. 14–21 (GHVDSGKS) serves as a coordination point for GTP. Lys-55 carries the post-translational modification N6,N6-dimethyllysine. Positions 70 to 74 (GITID) are G2. Lys-79 bears the N6,N6,N6-trimethyllysine mark. Residues 91–94 (DAPG) are G3. Residues 91–95 (DAPGH) and 153–156 (NKMD) contribute to the GTP site. The interval 153–156 (NKMD) is G4. The residue at position 187 (Lys-187) is an N6,N6,N6-trimethyllysine. Residues 194–196 (SGF) form a G5 region. An N6-methyllysine modification is found at Lys-261. Glu-289 bears the 5-glutamyl glycerylphosphorylethanolamine mark. An N6,N6,N6-trimethyllysine modification is found at Lys-306. Glu-362 is modified (5-glutamyl glycerylphosphorylethanolamine). Lys-396 is modified (N6,N6,N6-trimethyllysine).

The protein belongs to the TRAFAC class translation factor GTPase superfamily. Classic translation factor GTPase family. EF-Tu/EF-1A subfamily.

It is found in the cytoplasm. Functionally, this protein promotes the GTP-dependent binding of aminoacyl-tRNA to the A-site of ribosomes during protein biosynthesis. The protein is Elongation factor 1-alpha of Solanum lycopersicum (Tomato).